Here is a 150-residue protein sequence, read N- to C-terminus: Thyroid hormone-inducible hepatic protein (150 aa).

Positions 83-104 are disordered; that stretch reads KVAGNETSEAENDAAETEEAEE. At serine 90 the chain carries Phosphoserine. Residues 90–104 are compositionally biased toward acidic residues; that stretch reads SEAENDAAETEEAEE.

This sequence belongs to the SPOT14 family. In terms of assembly, homodimer. Heterodimer with MID1IP1. Interacts with THRB and PLAGL1. In terms of tissue distribution, mainly expressed in tissues that synthesize triglycerides.

It localises to the nucleus. It is found in the cytoplasm. Functionally, plays a role in the regulation of lipogenesis, especially in lactating mammary gland. Important for the biosynthesis of triglycerides with medium-length fatty acid chains. May modulate lipogenesis by interacting with MID1IP1 and preventing its interaction with ACACA. May function as transcriptional coactivator. May modulate the transcription factor activity of THRB. This Mus musculus (Mouse) protein is Thyroid hormone-inducible hepatic protein (Thrsp).